The primary structure comprises 265 residues: Undecaprenyl-diphosphatase (265 aa).

7 consecutive transmembrane segments (helical) span residues 38 to 58 (RSDF…CLAL), 75 to 95 (RDYV…GLIV), 108 to 128 (PVAW…HFAG), 135 to 155 (VVTW…GVFP), 181 to 201 (FVFM…LLEM), 215 to 235 (VAVA…WLLG), and 244 to 264 (VFAV…PAAA).

Belongs to the UppP family.

Its subcellular location is the cell inner membrane. The catalysed reaction is di-trans,octa-cis-undecaprenyl diphosphate + H2O = di-trans,octa-cis-undecaprenyl phosphate + phosphate + H(+). In terms of biological role, catalyzes the dephosphorylation of undecaprenyl diphosphate (UPP). Confers resistance to bacitracin. This is Undecaprenyl-diphosphatase from Xanthomonas euvesicatoria pv. vesicatoria (strain 85-10) (Xanthomonas campestris pv. vesicatoria).